The following is a 94-amino-acid chain: Acylphosphatase (94 aa).

Residues 5 to 94 (RLTAFVHGHV…PRDVEGFVER (90 aa)) enclose the Acylphosphatase-like domain. Catalysis depends on residues R20 and N38.

Belongs to the acylphosphatase family.

The enzyme catalyses an acyl phosphate + H2O = a carboxylate + phosphate + H(+). This chain is Acylphosphatase (acyP), found in Corynebacterium glutamicum (strain ATCC 13032 / DSM 20300 / JCM 1318 / BCRC 11384 / CCUG 27702 / LMG 3730 / NBRC 12168 / NCIMB 10025 / NRRL B-2784 / 534).